We begin with the raw amino-acid sequence, 167 residues long: Photosystem I assembly protein Ycf3 (167 aa).

TPR repeat units follow at residues 35 to 68 (AFSY…ETDA), 72 to 105 (SYIL…NPSL), and 120 to 153 (GEQA…APTN).

Belongs to the Ycf3 family.

It is found in the plastid. The protein resides in the chloroplast thylakoid membrane. Its function is as follows. Essential for the assembly of the photosystem I (PSI) complex. May act as a chaperone-like factor to guide the assembly of the PSI subunits. The protein is Photosystem I assembly protein Ycf3 of Chlorella vulgaris (Green alga).